The sequence spans 197 residues: Carbohydrate-binding domain-containing protein C2E1P3.05c (197 aa).

An N-terminal signal peptide occupies residues 1–23; the sequence is MLTQSLFLTVLTLALSLVSKTSA. 2 consecutive CBM1 domains span residues 25–61 and 68–104; these read QCSP…SQCI and PCAK…SQCI. Disulfide bonds link C33–C50, C44–C60, C76–C93, and C87–C103. A disordered region spans residues 115-163; it reads SSAASSTTSTTSSSSLVSSTTLTSSSPSAVSSTTSIPSISSTISSSVST. N-linked (GlcNAc...) asparagine glycosylation is found at N182 and N193.

It localises to the secreted. This is Carbohydrate-binding domain-containing protein C2E1P3.05c from Schizosaccharomyces pombe (strain 972 / ATCC 24843) (Fission yeast).